An 86-amino-acid chain; its full sequence is Anti-adapter protein IraP (86 aa).

The stretch at 1 to 36 (MKNLIAELLFKLAQKEEESKELCAQVEALEIIVTAM) forms a coiled coil.

This sequence belongs to the IraP family. Interacts with RssB.

It localises to the cytoplasm. Its function is as follows. Inhibits RpoS proteolysis by regulating RssB activity, thereby increasing the stability of the sigma stress factor RpoS especially during phosphate starvation, but also in stationary phase and during nitrogen starvation. Its effect on RpoS stability is due to its interaction with RssB, which probably blocks the interaction of RssB with RpoS, and the consequent delivery of the RssB-RpoS complex to the ClpXP protein degradation pathway. The polypeptide is Anti-adapter protein IraP (Escherichia coli O7:K1 (strain IAI39 / ExPEC)).